We begin with the raw amino-acid sequence, 513 residues long: 2-isopropylmalate synthase (513 aa).

One can recognise a Pyruvate carboxyltransferase domain in the interval 5–268; sequence LIIFDTTLRD…DVGVDTSQIV (264 aa). 4 residues coordinate Mn(2+): aspartate 14, histidine 202, histidine 204, and asparagine 239. Residues 394–513 are regulatory domain; the sequence is RFISLSQRSE…KAVQKINPQI (120 aa).

The protein belongs to the alpha-IPM synthase/homocitrate synthase family. LeuA type 1 subfamily. In terms of assembly, homodimer. Mn(2+) serves as cofactor.

It localises to the cytoplasm. It catalyses the reaction 3-methyl-2-oxobutanoate + acetyl-CoA + H2O = (2S)-2-isopropylmalate + CoA + H(+). The protein operates within amino-acid biosynthesis; L-leucine biosynthesis; L-leucine from 3-methyl-2-oxobutanoate: step 1/4. Functionally, catalyzes the condensation of the acetyl group of acetyl-CoA with 3-methyl-2-oxobutanoate (2-ketoisovalerate) to form 3-carboxy-3-hydroxy-4-methylpentanoate (2-isopropylmalate). The sequence is that of 2-isopropylmalate synthase from Cupriavidus pinatubonensis (strain JMP 134 / LMG 1197) (Cupriavidus necator (strain JMP 134)).